The chain runs to 441 residues: Collagen alpha-1(XXVI) chain (441 aa).

The signal sequence occupies residues 1 to 20; sequence MKLALLLPWACCCLCGSALA. Positions 52-128 constitute an EMI domain; that stretch reads RRHWCHHTVT…PGFTGSNCDE (77 aa). 3 cysteine pairs are disulfide-bonded: Cys56/Cys118, Cys83/Cys89, and Cys117/Cys126. Asn70 carries N-linked (GlcNAc...) asparagine glycosylation. An N-linked (GlcNAc...) asparagine glycan is attached at Asn132. 2 disordered regions span residues 156–362 and 390–441; these read AERP…AEGE and PLAS…SSRK. 2 Collagen-like domains span residues 199 to 267 and 302 to 355; these read GPAG…PGPS and GVPG…EGEK. Composition is skewed to pro residues over residues 200–215, 231–243, 252–269, and 306–327; these read PAGPPGQTGPPGPAGP, AGPPGLLGPPGPR, PGPPGPPGPAGNPGPSPN, and PRGPPGPPGPPGPRGPPGPPGT. The span at 348-357 shows a compositional bias: basic and acidic residues; that stretch reads VKGEEGEKAA.

As to quaternary structure, homotrimer or heterotrimer. Hydroxylated on proline residues.

It is found in the secreted. The protein localises to the extracellular space. It localises to the extracellular matrix. This Homo sapiens (Human) protein is Collagen alpha-1(XXVI) chain (COL26A1).